The following is a 591-amino-acid chain: Glutathione hydrolase (591 aa).

Positions 1–41 are cleaved as a signal peptide; the sequence is MASKWIEEQPLVHRRDIRISSKSRIAAGLLVLLVLWRYGLP. R122 contacts L-glutamate. Residues N135, N270, and N389 are each glycosylated (N-linked (GlcNAc...) asparagine). Catalysis depends on T393, which acts as the Nucleophile. Residues T411, E432, and 464-465 each bind L-glutamate; that span reads SA. N-linked (GlcNAc...) asparagine glycosylation occurs at N534.

It belongs to the gamma-glutamyltransferase family.

The catalysed reaction is an N-terminal (5-L-glutamyl)-[peptide] + an alpha-amino acid = 5-L-glutamyl amino acid + an N-terminal L-alpha-aminoacyl-[peptide]. It catalyses the reaction glutathione + H2O = L-cysteinylglycine + L-glutamate. It carries out the reaction an S-substituted glutathione + H2O = an S-substituted L-cysteinylglycine + L-glutamate. The protein operates within mycotoxin biosynthesis. Gamma-glutamyltransferase; part of the gene cluster that mediates the biosynthesis of the secondary metabolite ustiloxin B, an antimitotic tetrapeptide. First, ustA is processed by the subtilisin-like endoprotease Kex2 that is outside the ustiloxin B gene cluster, at the C-terminal side of Arg-Lys, after transfer to Golgi apparatus through the endoplasmic reticulum (ER). Cleavage by KEX2 generates 16 peptides YAIG-I to YAIG-XVI. To process the precursor peptide further, at least two peptidases are necessary to cleave the N-terminal and C-terminal sides of the Tyr-Ala-Ile-Gly core peptide which serves as backbone for the synthesis of ustiloxin B, through cyclization and modification of the tyrosine with a non-protein coding amino acid, norvaline. One of the two peptidases must be the serine peptidase ustP; and the other pepdidase is probably ustH. Macrocyclization of the core peptide derived from ustA requires the tyrosinase ustQ, as well as the homologous oxidases ustYa and ustYb, and leads to the production of the first cyclization product N-desmethylustiloxin F. For the formation of N-desmethylustiloxin F, three oxidation steps are required, hydroxylation at the benzylic position, hydroxylation at either the aromatic ring of Tyr or beta-position of Ile, and oxidative cyclization. UstQ may catalyze the oxidation of a phenol moiety, whereas the ustYa and ustYb are most likely responsible for the remaining two-step oxidations. N-desmethylustiloxin F is then methylated by ustM to yield ustiloxin F which in turn substrate of the cytochrome P450 monooxygenase ustC which catalyzes the formation of S-deoxyustiloxin H. The flavoprotein monooxygenases ustF1 and ustF2 then participate in the modification of the side chain of S-deoxyustiloxin H, leading to the synthesis of an oxime intermediate, via ustiloxin H. Finally, carboxylative dehydration performed by the cysteine desulfurase-like protein ustD yields ustiloxin B. This chain is Glutathione hydrolase, found in Aspergillus flavus (strain ATCC 200026 / FGSC A1120 / IAM 13836 / NRRL 3357 / JCM 12722 / SRRC 167).